A 118-amino-acid chain; its full sequence is Large ribosomal subunit protein bL20 (118 aa).

Belongs to the bacterial ribosomal protein bL20 family.

In terms of biological role, binds directly to 23S ribosomal RNA and is necessary for the in vitro assembly process of the 50S ribosomal subunit. It is not involved in the protein synthesizing functions of that subunit. This Protochlamydia amoebophila (strain UWE25) protein is Large ribosomal subunit protein bL20.